Here is a 294-residue protein sequence, read N- to C-terminus: NAD kinase (294 aa).

Aspartate 72 functions as the Proton acceptor in the catalytic mechanism. Residues aspartate 72–glycine 73, asparagine 146–aspartate 147, arginine 157, arginine 174, aspartate 176, threonine 187–serine 192, and glutamine 247 contribute to the NAD(+) site.

This sequence belongs to the NAD kinase family. A divalent metal cation is required as a cofactor.

It is found in the cytoplasm. It catalyses the reaction NAD(+) + ATP = ADP + NADP(+) + H(+). Functionally, involved in the regulation of the intracellular balance of NAD and NADP, and is a key enzyme in the biosynthesis of NADP. Catalyzes specifically the phosphorylation on 2'-hydroxyl of the adenosine moiety of NAD to yield NADP. The protein is NAD kinase of Saccharophagus degradans (strain 2-40 / ATCC 43961 / DSM 17024).